We begin with the raw amino-acid sequence, 952 residues long: uncharacterized protein (952 aa).

Residues 1-141 (MASLLARHTK…PWIADYLIRR (141 aa)) enclose the CheB-type methylesterase domain. A CheR-type methyltransferase domain is found at 168–440 (VGQFDGLEPA…SARHRIWQAL (273 aa)). The span at 923 to 935 (HNQTEASPETSSG) shows a compositional bias: polar residues. A disordered region spans residues 923 to 952 (HNQTEASPETSSGGLPGSDGTGADGGAPRA). Gly residues predominate over residues 936 to 952 (GLPGSDGTGADGGAPRA).

This is an uncharacterized protein from Rhodobacter capsulatus (Rhodopseudomonas capsulata).